Here is a 499-residue protein sequence, read N- to C-terminus: Proline--tRNA ligase (499 aa).

Belongs to the class-II aminoacyl-tRNA synthetase family. ProS type 3 subfamily. In terms of assembly, homodimer.

The protein resides in the cytoplasm. The catalysed reaction is tRNA(Pro) + L-proline + ATP = L-prolyl-tRNA(Pro) + AMP + diphosphate. Catalyzes the attachment of proline to tRNA(Pro) in a two-step reaction: proline is first activated by ATP to form Pro-AMP and then transferred to the acceptor end of tRNA(Pro). The protein is Proline--tRNA ligase of Bdellovibrio bacteriovorus (strain ATCC 15356 / DSM 50701 / NCIMB 9529 / HD100).